Consider the following 885-residue polypeptide: Sensor histidine kinase KdpD (885 aa).

4 consecutive transmembrane segments (helical) span residues 384–404, 415–435, 436–456, and 464–484; these read AIDMLKMILIQIICVMMGLWI, IILMIFLIGIILLSIWTRSFI, IGFLAAIINVFVFNYFFTEPR, and FDYPITFIVSILTSILTSALL. The Histidine kinase domain maps to 660 to 880; that stretch reads SISHDIRTPL…IFYFNIYTDF (221 aa). At His-663 the chain carries Phosphohistidine; by autocatalysis.

The protein localises to the membrane. The enzyme catalyses ATP + protein L-histidine = ADP + protein N-phospho-L-histidine.. Cyclic di-AMP is a negative regulator of the Kdp system. Member of the two-component regulatory system KdpD/KdpE that regulates the transcription of a series of virulence factors through sensing external K(+) concentrations. Also regulates capsular polysaccharide production. May function as a membrane-associated protein kinase that phosphorylates KdpE in response to environmental signals. In turn, KpdE functions as a transcriptional regulator by direct binding to promoter regions of target genes including spa, hla, aur and geh. The polypeptide is Sensor histidine kinase KdpD (Staphylococcus aureus (strain NCTC 8325 / PS 47)).